We begin with the raw amino-acid sequence, 724 residues long: Probable zinc transporter MSC2 (724 aa).

Residues 1–6 (MNLQEL) are Cytoplasmic-facing. Residues 7–27 (LAKVPLLLSYPTIILSSNLIV) traverse the membrane as a helical segment. The Lumenal portion of the chain corresponds to 28 to 58 (PSHNDLISRAASTSAAEYADEKLIFFSTDHA). The helical transmembrane segment at 59–79 (IRLIFLPTFVASSFNLFAHYF) threads the bilayer. The Cytoplasmic portion of the chain corresponds to 80 to 90 (NFINYSSRRKY). The helical transmembrane segment at 91–111 (YVLFTAIYFLSILTAIFHPIQ) threads the bilayer. The Lumenal portion of the chain corresponds to 112–134 (STCITLLIIKLLTTADESSPKIA). A helical transmembrane segment spans residues 135-155 (LNFKTILKTFVPFITLTLVIL). Residues 156 to 174 (RWDPSFDASSGDVNKISTS) are Cytoplasmic-facing. A helical membrane pass occupies residues 175 to 195 (LAAYALLILTLRYASPLILST). Topologically, residues 196–219 (LSSSIGVVSKDTSVAQHSISRNKR) are lumenal. Residues 220–240 (FPLILVLPIFSFVLLYLMTIV) form a helical membrane-spanning segment. The Cytoplasmic portion of the chain corresponds to 241–244 (NKTY). A helical transmembrane segment spans residues 245 to 265 (NIQLLMVFVFFGCLSIFFLSL). Topologically, residues 266–298 (KDLFTEDGNQKKGGQEDEYCRMFDIKYMISYLW) are lumenal. Residues 299–319 (LTRFTILLTGIMAIVVHFLSF) form a helical membrane-spanning segment. Over 320–386 (NEITSSIKTD…KQMALNKDTR (67 aa)) the chain is Cytoplasmic. The chain crosses the membrane as a helical span at residues 387-407 (SIFSFLLLNTAFMFVQLLYSF). Residues 408 to 417 (RSKSLGLLSD) lie on the Lumenal side of the membrane. The helical transmembrane segment at 418–438 (SLHMALDCTSLLLGLIAGVLT) threads the bilayer. Residues 439 to 453 (KKPASDKFPFGLNYL) lie on the Cytoplasmic side of the membrane. Residues 454–474 (GTLAGFTNGVLLLGIVCGIFV) traverse the membrane as a helical segment. Topologically, residues 475–491 (EAIERIFNPIHLHATNE) are lumenal. A helical membrane pass occupies residues 492 to 512 (LLVVATLGLLVNLVGLFAFDH). Over 513–528 (GAHDHGGTDNENMKGI) the chain is Cytoplasmic. Residues 529 to 549 (FLHILADTLGSVGVVISTLLI) form a helical membrane-spanning segment. The Lumenal portion of the chain corresponds to 550-563 (KLTHWPIFDPIASL). A helical transmembrane segment spans residues 564-584 (LIGSLILLSALPLLKSTSANI). The Cytoplasmic segment spans residues 585–724 (LLRLDDKKHN…NSLPLQPIAN (140 aa)). The disordered stretch occupies residues 614–653 (TPRFWPTESGSSGHSHAHTHSHAENHSHEHHHDQKNGSQE). Residues 634 to 648 (SHAENHSHEHHHDQK) show a composition bias toward basic and acidic residues.

Belongs to the cation diffusion facilitator (CDF) transporter (TC 2.A.4) family. SLC30A subfamily.

Its subcellular location is the endoplasmic reticulum membrane. The protein localises to the nucleus membrane. Probably act as a zinc ion transporter moving zinc from the nucleus/endoplasmic reticulum to the cytoplasm. Involved in zinc ion homeostasis and cellular distribution. The chain is Probable zinc transporter MSC2 (MSC2) from Saccharomyces cerevisiae (strain ATCC 204508 / S288c) (Baker's yeast).